The following is a 459-amino-acid chain: Exodeoxyribonuclease 7 large subunit (459 aa).

This sequence belongs to the XseA family. As to quaternary structure, heterooligomer composed of large and small subunits.

It is found in the cytoplasm. It carries out the reaction Exonucleolytic cleavage in either 5'- to 3'- or 3'- to 5'-direction to yield nucleoside 5'-phosphates.. Functionally, bidirectionally degrades single-stranded DNA into large acid-insoluble oligonucleotides, which are then degraded further into small acid-soluble oligonucleotides. The sequence is that of Exodeoxyribonuclease 7 large subunit from Pseudomonas fluorescens (strain ATCC BAA-477 / NRRL B-23932 / Pf-5).